We begin with the raw amino-acid sequence, 287 residues long: uncharacterized protein (287 aa).

This is an uncharacterized protein from Methanocaldococcus jannaschii (strain ATCC 43067 / DSM 2661 / JAL-1 / JCM 10045 / NBRC 100440) (Methanococcus jannaschii).